The following is a 286-amino-acid chain: Putative S-adenosyl-L-methionine-dependent methyltransferase FRAAL3718 (286 aa).

Residues Asp-122 and 151-152 each bind S-adenosyl-L-methionine; that span reads DL.

This sequence belongs to the UPF0677 family.

In terms of biological role, exhibits S-adenosyl-L-methionine-dependent methyltransferase activity. This is Putative S-adenosyl-L-methionine-dependent methyltransferase FRAAL3718 from Frankia alni (strain DSM 45986 / CECT 9034 / ACN14a).